Here is a 639-residue protein sequence, read N- to C-terminus: 1-deoxy-D-xylulose-5-phosphate synthase 1 (639 aa).

Residues histidine 79 and 120–122 (AHS) contribute to the thiamine diphosphate site. Aspartate 155 is a Mg(2+) binding site. Residues 156–157 (GA), asparagine 184, tyrosine 293, and glutamate 373 contribute to the thiamine diphosphate site. A Mg(2+)-binding site is contributed by asparagine 184.

This sequence belongs to the transketolase family. DXPS subfamily. In terms of assembly, homodimer. It depends on Mg(2+) as a cofactor. Thiamine diphosphate is required as a cofactor.

It carries out the reaction D-glyceraldehyde 3-phosphate + pyruvate + H(+) = 1-deoxy-D-xylulose 5-phosphate + CO2. It functions in the pathway metabolic intermediate biosynthesis; 1-deoxy-D-xylulose 5-phosphate biosynthesis; 1-deoxy-D-xylulose 5-phosphate from D-glyceraldehyde 3-phosphate and pyruvate: step 1/1. Catalyzes the acyloin condensation reaction between C atoms 2 and 3 of pyruvate and glyceraldehyde 3-phosphate to yield 1-deoxy-D-xylulose-5-phosphate (DXP). This Jannaschia sp. (strain CCS1) protein is 1-deoxy-D-xylulose-5-phosphate synthase 1.